A 137-amino-acid chain; its full sequence is uncharacterized protein (137 aa).

A helical membrane pass occupies residues Thr-20 to Ala-42.

Its subcellular location is the host membrane. This is an uncharacterized protein from Dryophytes versicolor (chameleon treefrog).